Consider the following 727-residue polypeptide: Sodium-dependent neutral amino acid transporter SLC6A17 (727 aa).

Residues 1-68 (MPKNSKVTQR…DRPAWNSKLQ (68 aa)) lie on the Cytoplasmic side of the membrane. 2 positions are modified to phosphoserine: Ser-13 and Ser-20. A helical transmembrane segment spans residues 69 to 89 (YILAQIGFSVGLGNIWRFPYL). Over 90–96 (CQKNGGG) the chain is Extracellular. The chain crosses the membrane as a helical span at residues 97-116 (AYLVPYLVLLIIIGIPLFFL). Over 117-140 (ELAVGQRIRRGSIGVWHYVCPRLG) the chain is Cytoplasmic. A helical transmembrane segment spans residues 141 to 161 (GIGFSSCIVCLFVGLYYNVII). Over 162–224 (GWSVFYFFKS…NSISESGGLN (63 aa)) the chain is Extracellular. Asn-186 carries N-linked (GlcNAc...) asparagine glycosylation. The helical transmembrane segment at 225 to 243 (WKMTVCLLVAWSIVGMAVV) threads the bilayer. Topologically, residues 244-251 (KGIQSSGK) are cytoplasmic. Residues 252-269 (VMYFSSLFPYVVLACFLV) form a helical membrane-spanning segment. Over 270 to 304 (RGLLLRGAVDGILHMFTPKLDKMLDPQVWREAATQ) the chain is Extracellular. Residues 305–322 (VFFALGLGFGGVIAFSSY) traverse the membrane as a helical segment. Over 323–333 (NKQDNNCHFDA) the chain is Cytoplasmic. The helical transmembrane segment at 334–355 (ALVSFINFFTSVLATLVVFAVL) threads the bilayer. Topologically, residues 356–451 (GFKANIMNEK…FIAFTEAMTH (96 aa)) are extracellular. Tyr-377 carries the phosphotyrosine modification. Asn-393 carries N-linked (GlcNAc...) asparagine glycosylation. The chain crosses the membrane as a helical span at residues 452–471 (FPASPFWSVMFFLMLINLGL). Residues 472 to 494 (GSMIGTMAGITTPIIDTFKVPKE) are Cytoplasmic-facing. The chain crosses the membrane as a helical span at residues 495–513 (MFTVGCCVFAFFVGLLFVQ). The Extracellular portion of the chain corresponds to 514 to 528 (RSGNYFVTMFDDYSA). A helical transmembrane segment spans residues 529–549 (TLPLTVIVILENIAVAWIYGT). The Cytoplasmic segment spans residues 550–569 (KKFMQELTEMLGFRPYRFYF). A helical membrane pass occupies residues 570–591 (YMWKFVSPLCMAVLTTASIIQL). The Extracellular portion of the chain corresponds to 592 to 618 (GVSPPGYSAWIKEEAAERYLYFPNWAM). Residues 619-641 (ALLITLIAVATLPIPVVFILRHF) form a helical membrane-spanning segment. The Cytoplasmic portion of the chain corresponds to 642–727 (HLLSDGSNTL…LLASTPESEL (86 aa)). Phosphoserine is present on residues Ser-665 and Ser-701. Residues 680 to 727 (VPSEAPSPMPTHRSYLGPGSTSPLESSSHPNGRYGSGYLLASTPESEL) are disordered. The span at 698 to 709 (GSTSPLESSSHP) shows a compositional bias: polar residues.

This sequence belongs to the sodium:neurotransmitter symporter (SNF) (TC 2.A.22) family. As to expression, found exclusively in the central nervous system and is more abundant in the cerebellum and the cerebral cortex. Expressed in PC-12 cell line.

Its subcellular location is the cytoplasmic vesicle. It localises to the secretory vesicle. It is found in the synaptic vesicle membrane. The protein localises to the postsynapse. The protein resides in the presynapse. It catalyses the reaction L-proline(in) + Na(+)(in) = L-proline(out) + Na(+)(out). The catalysed reaction is L-leucine(in) + Na(+)(in) = L-leucine(out) + Na(+)(out). The enzyme catalyses glycine(in) + Na(+)(in) = glycine(out) + Na(+)(out). It carries out the reaction L-alanine(in) + Na(+)(in) = L-alanine(out) + Na(+)(out). It catalyses the reaction L-glutamine(in) + Na(+)(in) = L-glutamine(out) + Na(+)(out). In terms of biological role, synaptic vesicle transporter with apparent selectivity for neutral amino acids. The transport is sodium-coupled but chloride-independent, likely driven by the proton electrochemical gradient generated by vacuolar H(+)-ATPase in an overall electrogenic mechanism. May contribute to the synaptic uptake of neurotransmitter precursors in a process coupled in part to vesicle exocytosis. The protein is Sodium-dependent neutral amino acid transporter SLC6A17 of Rattus norvegicus (Rat).